The following is a 260-amino-acid chain: GDSL esterase/lipase WDL1 (260 aa).

An N-terminal signal peptide occupies residues M1 to A35. The Nucleophile role is filled by S18. N83 and N150 each carry an N-linked (GlcNAc...) asparagine glycan. Residues D191 and H194 contribute to the active site.

Belongs to the 'GDSL' lipolytic enzyme family. In terms of tissue distribution, highly expressed in panicles. Expressed in shoots, mature flowers and seeds.

The protein resides in the endoplasmic reticulum. Its function is as follows. Involved in the organization of leaf cuticle and wax crystals. The sequence is that of GDSL esterase/lipase WDL1 from Oryza sativa subsp. japonica (Rice).